The primary structure comprises 362 residues: MIFKKALYILLFLYIAIVKKGESKPGSKHPFLFKNLVIDKKKLDSSYYNKYDNIKWNGKIIAIGDIHGDIESLKLILRHSKLIGENDNWIGDNVLLVQNGDVFDRGIYGPIIYNFLFKLQKEAIKKNSRVILIMGNHEQLNLCGYFNYVNPKEIEMFFHNDANYRYHSFVNPYGEYHKRLIRLPPMVKVNNIIFTHGGLNLLISKLSINDINLKTRLQIENNCKPIKYDSFQNYLSRDGVLWSDAMSRNVPYYEKEKCSELFQILDKYDAKYLVVGHTRQPSHQIGSYCNNHYFLIDTGMSLFTNYGQPYPNYLKIDDHKIKAVRLIVEKKKKCPHTEIQLNTPNKIKYCVQESQTNLNPVL.

Positions 1–23 (MIFKKALYILLFLYIAIVKKGES) are cleaved as a signal peptide. Asp65, His67, Asp101, and Asn136 together coordinate Mn(2+). His137 functions as the Proton donor in the catalytic mechanism. Residue His196 coordinates Mn(2+).

This sequence belongs to the metallophosphoesterase superfamily. SLP family. Mn(2+) serves as cofactor.

Its function is as follows. Phosphatase which plays an essential role in the development and differentiation of the ookinete and in the formation of ookinete micronemes. The sequence is that of Shewanella-like protein phosphatase 1 from Plasmodium berghei (strain Anka).